Consider the following 111-residue polypeptide: Antirepressor protein CarS (111 aa).

As to quaternary structure, monomer. Interacts with CarA and CarH.

In terms of biological role, involved in carotenoid biosynthesis. Antagonizes the transcriptional repressor proteins CarA and CarH by preventing their binding to DNA. Can also dissociate preformed CarA-DNA complexes. Does not bind DNA. The polypeptide is Antirepressor protein CarS (carS) (Myxococcus xanthus).